Consider the following 273-residue polypeptide: Cytosolic sulfotransferase 4 (273 aa).

Position 74 to 79 (Lys-74 to Trp-79) interacts with 3'-phosphoadenylyl sulfate. The active-site Proton acceptor is the His-121. 3'-phosphoadenylyl sulfate contacts are provided by residues Arg-143 and Arg-239–Gly-241.

It belongs to the sulfotransferase 1 family.

The protein localises to the cytoplasm. In terms of biological role, sulfotransferase that utilizes 3'-phospho-5'-adenylyl sulfate (PAPS) as sulfonate donor. The chain is Cytosolic sulfotransferase 4 (SOT4) from Arabidopsis thaliana (Mouse-ear cress).